A 272-amino-acid polypeptide reads, in one-letter code: Orotidine 5'-phosphate decarboxylase (272 aa).

Lys93 serves as the catalytic Proton donor.

The protein belongs to the OMP decarboxylase family. Type 2 subfamily.

The catalysed reaction is orotidine 5'-phosphate + H(+) = UMP + CO2. It participates in pyrimidine metabolism; UMP biosynthesis via de novo pathway; UMP from orotate: step 2/2. The polypeptide is Orotidine 5'-phosphate decarboxylase (Roseiflexus sp. (strain RS-1)).